We begin with the raw amino-acid sequence, 255 residues long: Hydroxyacylglutathione hydrolase (255 aa).

Positions 53, 55, 57, 58, 110, 127, and 165 each coordinate Zn(2+).

It belongs to the metallo-beta-lactamase superfamily. Glyoxalase II family. In terms of assembly, monomer. Zn(2+) is required as a cofactor.

The catalysed reaction is an S-(2-hydroxyacyl)glutathione + H2O = a 2-hydroxy carboxylate + glutathione + H(+). Its pathway is secondary metabolite metabolism; methylglyoxal degradation; (R)-lactate from methylglyoxal: step 2/2. In terms of biological role, thiolesterase that catalyzes the hydrolysis of S-D-lactoyl-glutathione to form glutathione and D-lactic acid. This Xanthomonas axonopodis pv. citri (strain 306) protein is Hydroxyacylglutathione hydrolase.